The primary structure comprises 458 residues: Flavonol 3-O-glucosyltransferase F3GT2 (458 aa).

H20 acts as the Proton acceptor in catalysis. H20 contacts an anthocyanidin. D119 (charge relay) is an active-site residue. T141 serves as a coordination point for UDP-alpha-D-glucose. H150 serves as a coordination point for an anthocyanidin. Positions 333, 335, 350, 353, 354, 355, and 358 each coordinate UDP-alpha-D-glucose. G373 lines the an anthocyanidin pocket. D374 and Q375 together coordinate UDP-alpha-D-glucose.

Belongs to the UDP-glycosyltransferase family. Expressed in ovaries.

It carries out the reaction a flavonol + UDP-alpha-D-glucose = a flavonol 3-O-beta-D-glucoside + UDP + H(+). Its pathway is flavonoid metabolism. Its function is as follows. Catalyzes the glucosylation of quercetin. Preferentially uses UDP-glucose as sugar donor, but is also able to use UDP-gal and UDP-xyl. Is probably not required for the accumulation of anthocyanin in red-fleshed kiwifruit varieties. The polypeptide is Flavonol 3-O-glucosyltransferase F3GT2 (Actinidia chinensis var. chinensis (Chinese soft-hair kiwi)).